The primary structure comprises 296 residues: Nitrogenase iron protein (296 aa).

12-19 (GKGGIGKS) is an ATP binding site. [4Fe-4S] cluster is bound at residue cysteine 100. Arginine 103 carries the post-translational modification ADP-ribosylarginine; by dinitrogenase reductase ADP-ribosyltransferase. Cysteine 134 contacts [4Fe-4S] cluster.

Belongs to the NifH/BchL/ChlL family. Homodimer. It depends on [4Fe-4S] cluster as a cofactor. The reversible ADP-ribosylation of Arg-103 inactivates the nitrogenase reductase and regulates nitrogenase activity.

It catalyses the reaction N2 + 8 reduced [2Fe-2S]-[ferredoxin] + 16 ATP + 16 H2O = H2 + 8 oxidized [2Fe-2S]-[ferredoxin] + 2 NH4(+) + 16 ADP + 16 phosphate + 6 H(+). Its function is as follows. The key enzymatic reactions in nitrogen fixation are catalyzed by the nitrogenase complex, which has 2 components: the iron protein and the molybdenum-iron protein. This chain is Nitrogenase iron protein, found in Acidithiobacillus ferrooxidans (strain ATCC 23270 / DSM 14882 / CIP 104768 / NCIMB 8455) (Ferrobacillus ferrooxidans (strain ATCC 23270)).